A 168-amino-acid chain; its full sequence is Probable acetolactate synthase small subunit (168 aa).

Residues 10–84 (IISALVEHKP…DVIKVRDLEP (75 aa)) form the ACT domain.

The protein belongs to the acetolactate synthase small subunit family. In terms of assembly, dimer of large and small chains.

It catalyses the reaction 2 pyruvate + H(+) = (2S)-2-acetolactate + CO2. It participates in amino-acid biosynthesis; L-isoleucine biosynthesis; L-isoleucine from 2-oxobutanoate: step 1/4. Its pathway is amino-acid biosynthesis; L-valine biosynthesis; L-valine from pyruvate: step 1/4. The protein is Probable acetolactate synthase small subunit (ilvH) of Methanothermobacter thermautotrophicus (strain ATCC 29096 / DSM 1053 / JCM 10044 / NBRC 100330 / Delta H) (Methanobacterium thermoautotrophicum).